We begin with the raw amino-acid sequence, 297 residues long: tRNA dimethylallyltransferase (297 aa).

An ATP-binding site is contributed by 10–17 (GITASGKS). Position 12–17 (12–17 (TASGKS)) interacts with substrate. Positions 36 to 39 (DSKQ) are interaction with substrate tRNA.

The protein belongs to the IPP transferase family. In terms of assembly, monomer. Requires Mg(2+) as cofactor.

It carries out the reaction adenosine(37) in tRNA + dimethylallyl diphosphate = N(6)-dimethylallyladenosine(37) in tRNA + diphosphate. Functionally, catalyzes the transfer of a dimethylallyl group onto the adenine at position 37 in tRNAs that read codons beginning with uridine, leading to the formation of N6-(dimethylallyl)adenosine (i(6)A). The polypeptide is tRNA dimethylallyltransferase (Wolbachia pipientis subsp. Culex pipiens (strain wPip)).